The chain runs to 446 residues: UDP-N-acetylmuramoylalanine--D-glutamate ligase (446 aa).

116–122 (GSNGKTT) provides a ligand contact to ATP.

The protein belongs to the MurCDEF family.

The protein resides in the cytoplasm. It catalyses the reaction UDP-N-acetyl-alpha-D-muramoyl-L-alanine + D-glutamate + ATP = UDP-N-acetyl-alpha-D-muramoyl-L-alanyl-D-glutamate + ADP + phosphate + H(+). The protein operates within cell wall biogenesis; peptidoglycan biosynthesis. Cell wall formation. Catalyzes the addition of glutamate to the nucleotide precursor UDP-N-acetylmuramoyl-L-alanine (UMA). The polypeptide is UDP-N-acetylmuramoylalanine--D-glutamate ligase (Marinobacter nauticus (strain ATCC 700491 / DSM 11845 / VT8) (Marinobacter aquaeolei)).